The chain runs to 224 residues: Peroxynitrite isomerase 2 (224 aa).

The short motif at 71-77 (GVWRGEG) is the GXWXGXG element. Residues Lys-187 and His-214 each contribute to the heme b site.

It belongs to the nitrobindin family. Homodimer. The cofactor is heme b.

It catalyses the reaction peroxynitrite = nitrate. Its pathway is nitrogen metabolism. Heme-binding protein able to scavenge peroxynitrite and to protect free L-tyrosine against peroxynitrite-mediated nitration, by acting as a peroxynitrite isomerase that converts peroxynitrite to nitrate. Therefore, this protein likely plays a role in peroxynitrite sensing and in the detoxification of reactive nitrogen and oxygen species (RNS and ROS, respectively). Is able to bind nitric oxide (NO) in vitro, but may act as a sensor of peroxynitrite levels in vivo. The protein is Peroxynitrite isomerase 2 of Mycobacterium sp. (strain JLS).